Here is a 464-residue protein sequence, read N- to C-terminus: Nuclear distribution protein nudF 2 (464 aa).

A LisH domain is found at 9-41 (QAAELNKSIIAYLSAHGLAETLAAFRKESDFPD). Positions 63–88 (NSTLMKKLLALESHNKALRNELNSTR) form a coiled coil. 8 WD repeats span residues 112 to 151 (SHRD…LERT), 154 to 195 (GHTM…KNVK), 199 to 238 (GHDH…RVKT), 241 to 280 (DHTG…PICK), 285 to 343 (GHEN…MTLT), 344 to 383 (GHAS…RCVK), 388 to 424 (AHDG…AELP), and 426 to 464 (SKLD…RSHK).

This sequence belongs to the WD repeat LIS1/nudF family. In terms of assembly, self-associates. Interacts with nudE and dynein.

It localises to the cytoplasm. The protein localises to the cytoskeleton. Its subcellular location is the spindle pole. Positively regulates the activity of the minus-end directed microtubule motor protein dynein. May enhance dynein-mediated microtubule sliding by targeting dynein to the microtubule plus end. Required for nuclear migration during vegetative growth as well as development. Required for retrograde early endosome (EE) transport from the hyphal tip. Required for localization of dynein to the mitotic spindle poles. Recruits additional proteins to the dynein complex at SPBs. This chain is Nuclear distribution protein nudF 2, found in Penicillium rubens (strain ATCC 28089 / DSM 1075 / NRRL 1951 / Wisconsin 54-1255) (Penicillium chrysogenum).